Reading from the N-terminus, the 143-residue chain is MSLSSKDKATVKLFWGRMSGKAELIGADALSRMLAVYPQTKTYFSHWKSLSPGSPDVKKHGKTIMMGIGDAVTKMDDLERGLLTLSELHAFKLRVDPTNFKLLSLNILVVMAIMFPDDFTPMAHLAVDKLFCGRALALAEKYR.

Ser2 is subject to N-acetylserine. The Globin domain occupies 2-143 (SLSSKDKATV…RALALAEKYR (142 aa)). Residue His60 coordinates O2. Heme b is bound at residue His89.

The protein belongs to the globin family. As to quaternary structure, hb 1 is a heterotetramer of two alpha-1 and two beta-1 chains. Hb 3 is a heterotetramer of two alpha-1 and two beta-2 chains. Red blood cells.

In terms of biological role, involved in oxygen transport from gills to the various peripheral tissues. This chain is Hemoglobin subunit alpha-1 (hba1), found in Gadus morhua (Atlantic cod).